The primary structure comprises 190 residues: Putative protein p47 (190 aa).

In Escherichia coli (Bacteriophage APSE-1), this protein is Putative protein p47 (47).